The sequence spans 574 residues: Proline--tRNA ligase (574 aa).

The protein belongs to the class-II aminoacyl-tRNA synthetase family. ProS type 1 subfamily. Homodimer.

It localises to the cytoplasm. The catalysed reaction is tRNA(Pro) + L-proline + ATP = L-prolyl-tRNA(Pro) + AMP + diphosphate. Catalyzes the attachment of proline to tRNA(Pro) in a two-step reaction: proline is first activated by ATP to form Pro-AMP and then transferred to the acceptor end of tRNA(Pro). As ProRS can inadvertently accommodate and process non-cognate amino acids such as alanine and cysteine, to avoid such errors it has two additional distinct editing activities against alanine. One activity is designated as 'pretransfer' editing and involves the tRNA(Pro)-independent hydrolysis of activated Ala-AMP. The other activity is designated 'posttransfer' editing and involves deacylation of mischarged Ala-tRNA(Pro). The misacylated Cys-tRNA(Pro) is not edited by ProRS. This Nitrosococcus oceani (strain ATCC 19707 / BCRC 17464 / JCM 30415 / NCIMB 11848 / C-107) protein is Proline--tRNA ligase.